Here is a 342-residue protein sequence, read N- to C-terminus: MTRGLTYSLTELATAIGATVQGDGDCKIHNVAAIAQAQPGEISFVTDRKYRKYLTQTKASAILLDEKLASRCPINALVMSNPKLGFAKLLTLLRPQSLPTGGIHPTAVVGANCQIDPSAHIGAHVVIEEDVVIGPRTLIGAGASIGRGSQIGSDCCLHSRVTLYSQTRIGDRSIIHSGAVIGADGFGLIQDEKGEWVKIPQVGRVIIGDDVEIGANATIDRGALDDTVIGNGVKIDDLVMIAHNVRIGDHTVIAGCAGVAGSTTVGRHCMIGASAGLNGHIEICDNVIITGMGMIQKSITKPGIYSSGTGMQTNREWRKSVIRFWQLDELAKRLKRLEKLIR.

His243 functions as the Proton acceptor in the catalytic mechanism.

It belongs to the transferase hexapeptide repeat family. LpxD subfamily. As to quaternary structure, homotrimer.

It catalyses the reaction a UDP-3-O-[(3R)-3-hydroxyacyl]-alpha-D-glucosamine + a (3R)-hydroxyacyl-[ACP] = a UDP-2-N,3-O-bis[(3R)-3-hydroxyacyl]-alpha-D-glucosamine + holo-[ACP] + H(+). It participates in bacterial outer membrane biogenesis; LPS lipid A biosynthesis. Functionally, catalyzes the N-acylation of UDP-3-O-acylglucosamine using 3-hydroxyacyl-ACP as the acyl donor. Is involved in the biosynthesis of lipid A, a phosphorylated glycolipid that anchors the lipopolysaccharide to the outer membrane of the cell. This chain is UDP-3-O-acylglucosamine N-acyltransferase, found in Coxiella burnetii (strain CbuK_Q154) (Coxiella burnetii (strain Q154)).